The following is a 712-amino-acid chain: Polyribonucleotide nucleotidyltransferase (712 aa).

Mg(2+) contacts are provided by D487 and D493. Positions 554–613 (PKIITMTINPDKIRDVIGPSGKQINKIIEETGVKIDIEQDGTVFISSINQEMNDKAKKII) constitute a KH domain. The S1 motif domain occupies 623–691 (GEIYEGKVKR…KQGRVNLSRK (69 aa)).

This sequence belongs to the polyribonucleotide nucleotidyltransferase family. It depends on Mg(2+) as a cofactor.

It localises to the cytoplasm. It carries out the reaction RNA(n+1) + phosphate = RNA(n) + a ribonucleoside 5'-diphosphate. Functionally, involved in mRNA degradation. Catalyzes the phosphorolysis of single-stranded polyribonucleotides processively in the 3'- to 5'-direction. This chain is Polyribonucleotide nucleotidyltransferase, found in Bacillus cereus (strain G9842).